The primary structure comprises 109 residues: Phosphoribosyl-ATP pyrophosphatase (109 aa).

This sequence belongs to the PRA-PH family.

It is found in the cytoplasm. The enzyme catalyses 1-(5-phospho-beta-D-ribosyl)-ATP + H2O = 1-(5-phospho-beta-D-ribosyl)-5'-AMP + diphosphate + H(+). It functions in the pathway amino-acid biosynthesis; L-histidine biosynthesis; L-histidine from 5-phospho-alpha-D-ribose 1-diphosphate: step 2/9. The sequence is that of Phosphoribosyl-ATP pyrophosphatase from Paramagnetospirillum magneticum (strain ATCC 700264 / AMB-1) (Magnetospirillum magneticum).